Consider the following 225-residue polypeptide: C-reactive protein (225 aa).

Positions 1-19 are cleaved as a signal peptide; the sequence is MAKLLLYFLLLTSLSDVFG. Residues 24-225 form the Pentraxin (PTX) domain; sequence SKKTFVFPKE…EVFIKPQLWP (202 aa). An intrachain disulfide couples Cys55 to Cys116. 4 residues coordinate Ca(2+): Asn80, Gln158, Asp159, and Gln169.

Belongs to the pentraxin family. As to quaternary structure, homopentamer. Pentraxin (or pentaxin) have a discoid arrangement of 5 non-covalently bound subunits. Interacts with FCN1; may regulate monocyte activation by FCN1. Ca(2+) serves as cofactor. In terms of tissue distribution, found in plasma.

The protein resides in the secreted. In terms of biological role, displays several functions associated with host defense: it promotes agglutination, bacterial capsular swelling, phagocytosis and complement fixation through its calcium-dependent binding to phosphorylcholine. Can interact with DNA and histones and may scavenge nuclear material released from damaged circulating cells. In Cavia porcellus (Guinea pig), this protein is C-reactive protein (CRP).